A 206-amino-acid polypeptide reads, in one-letter code: Small ribosomal subunit protein uS4 (206 aa).

The 62-residue stretch at 96-157 (QRLDNVVYRM…KAKKQARIGA (62 aa)) folds into the S4 RNA-binding domain.

The protein belongs to the universal ribosomal protein uS4 family. As to quaternary structure, part of the 30S ribosomal subunit. Contacts protein S5. The interaction surface between S4 and S5 is involved in control of translational fidelity.

Functionally, one of the primary rRNA binding proteins, it binds directly to 16S rRNA where it nucleates assembly of the body of the 30S subunit. With S5 and S12 plays an important role in translational accuracy. The protein is Small ribosomal subunit protein uS4 of Idiomarina loihiensis (strain ATCC BAA-735 / DSM 15497 / L2-TR).